A 198-amino-acid polypeptide reads, in one-letter code: Peptide deformylase (198 aa).

Fe cation is bound by residues Cys123 and His167. Residue Glu168 is part of the active site. Residue His171 participates in Fe cation binding.

It belongs to the polypeptide deformylase family. Fe(2+) is required as a cofactor.

The enzyme catalyses N-terminal N-formyl-L-methionyl-[peptide] + H2O = N-terminal L-methionyl-[peptide] + formate. Its function is as follows. Removes the formyl group from the N-terminal Met of newly synthesized proteins. Requires at least a dipeptide for an efficient rate of reaction. N-terminal L-methionine is a prerequisite for activity but the enzyme has broad specificity at other positions. The sequence is that of Peptide deformylase from Ureaplasma parvum serovar 3 (strain ATCC 27815 / 27 / NCTC 11736).